A 145-amino-acid chain; its full sequence is uncharacterized protein (145 aa).

Disordered regions lie at residues 1-41 and 122-145; these read MRRL…PPGT and RLPSLVHGPSHPDSQHPREVPLAL. Residues 20-34 show a composition bias toward polar residues; sequence GGPQNGTSGCTTAPQ. The segment covering 134–145 has biased composition (basic and acidic residues); sequence DSQHPREVPLAL.

Ubiquitous.

This is an uncharacterized protein from Homo sapiens (Human).